A 218-amino-acid polypeptide reads, in one-letter code: Urease accessory protein UreG (218 aa).

22–29 (GPVGSGKT) contacts GTP.

It belongs to the SIMIBI class G3E GTPase family. UreG subfamily. Homodimer. UreD, UreF and UreG form a complex that acts as a GTP-hydrolysis-dependent molecular chaperone, activating the urease apoprotein by helping to assemble the nickel containing metallocenter of UreC. The UreE protein probably delivers the nickel.

It is found in the cytoplasm. Functionally, facilitates the functional incorporation of the urease nickel metallocenter. This process requires GTP hydrolysis, probably effectuated by UreG. In Polaromonas naphthalenivorans (strain CJ2), this protein is Urease accessory protein UreG.